Reading from the N-terminus, the 180-residue chain is ATP-dependent protease subunit HslV (180 aa).

Threonine 5 is an active-site residue. Na(+)-binding residues include glycine 161, cysteine 164, and threonine 167.

It belongs to the peptidase T1B family. HslV subfamily. In terms of assembly, a double ring-shaped homohexamer of HslV is capped on each side by a ring-shaped HslU homohexamer. The assembly of the HslU/HslV complex is dependent on binding of ATP.

It localises to the cytoplasm. It catalyses the reaction ATP-dependent cleavage of peptide bonds with broad specificity.. With respect to regulation, allosterically activated by HslU binding. In terms of biological role, protease subunit of a proteasome-like degradation complex believed to be a general protein degrading machinery. In Campylobacter jejuni subsp. doylei (strain ATCC BAA-1458 / RM4099 / 269.97), this protein is ATP-dependent protease subunit HslV.